A 564-amino-acid chain; its full sequence is Pyruvate decarboxylase (564 aa).

Residues Asp-28 and His-115 each coordinate pyruvate. Thiamine diphosphate-binding positions include Thr-390 and 413–415 (GSI). Mg(2+) is bound at residue Asp-444. Thiamine diphosphate contacts are provided by residues 445-446 (GS) and 471-476 (NDGYTI). Positions 471 and 473 each coordinate Mg(2+). Glu-477 serves as a coordination point for pyruvate.

This sequence belongs to the TPP enzyme family. Homotetramer. Mg(2+) serves as cofactor. It depends on thiamine diphosphate as a cofactor.

It carries out the reaction a 2-oxocarboxylate + H(+) = an aldehyde + CO2. It catalyses the reaction pyruvate + H(+) = acetaldehyde + CO2. This Kluyveromyces marxianus (Yeast) protein is Pyruvate decarboxylase (PDC1).